The sequence spans 130 residues: Ribosome-binding factor A (130 aa).

It belongs to the RbfA family. As to quaternary structure, monomer. Binds 30S ribosomal subunits, but not 50S ribosomal subunits or 70S ribosomes.

It localises to the cytoplasm. Functionally, one of several proteins that assist in the late maturation steps of the functional core of the 30S ribosomal subunit. Associates with free 30S ribosomal subunits (but not with 30S subunits that are part of 70S ribosomes or polysomes). Required for efficient processing of 16S rRNA. May interact with the 5'-terminal helix region of 16S rRNA. The sequence is that of Ribosome-binding factor A from Roseiflexus castenholzii (strain DSM 13941 / HLO8).